A 157-amino-acid chain; its full sequence is SsrA-binding protein (157 aa).

The tract at residues 134-157 (HDKRESEKKRDWGREKGRLLRARG) is disordered. The segment covering 135 to 151 (DKRESEKKRDWGREKGR) has biased composition (basic and acidic residues).

It belongs to the SmpB family.

The protein localises to the cytoplasm. Functionally, required for rescue of stalled ribosomes mediated by trans-translation. Binds to transfer-messenger RNA (tmRNA), required for stable association of tmRNA with ribosomes. tmRNA and SmpB together mimic tRNA shape, replacing the anticodon stem-loop with SmpB. tmRNA is encoded by the ssrA gene; the 2 termini fold to resemble tRNA(Ala) and it encodes a 'tag peptide', a short internal open reading frame. During trans-translation Ala-aminoacylated tmRNA acts like a tRNA, entering the A-site of stalled ribosomes, displacing the stalled mRNA. The ribosome then switches to translate the ORF on the tmRNA; the nascent peptide is terminated with the 'tag peptide' encoded by the tmRNA and targeted for degradation. The ribosome is freed to recommence translation, which seems to be the essential function of trans-translation. The sequence is that of SsrA-binding protein from Nitrobacter hamburgensis (strain DSM 10229 / NCIMB 13809 / X14).